Consider the following 504-residue polypeptide: Maturase K (504 aa).

This sequence belongs to the intron maturase 2 family. MatK subfamily.

It is found in the plastid. Its subcellular location is the chloroplast. In terms of biological role, usually encoded in the trnK tRNA gene intron. Probably assists in splicing its own and other chloroplast group II introns. The sequence is that of Maturase K from Gossypium barbadense (Sea Island cotton).